The following is a 548-amino-acid chain: Lipase 2 (548 aa).

A signal peptide spans 1–14 (MKLCLLALGAAVAA). The cysteines at positions 74 and 111 are disulfide-linked. Serine 223 serves as the catalytic Acyl-ester intermediate. Cysteine 282 and cysteine 291 are joined by a disulfide. The active-site Charge relay system is glutamate 355. Asparagine 365 carries N-linked (GlcNAc...) asparagine glycosylation. The active-site Charge relay system is histidine 463.

The protein belongs to the type-B carboxylesterase/lipase family.

The catalysed reaction is a triacylglycerol + H2O = a diacylglycerol + a fatty acid + H(+). The chain is Lipase 2 (LIP2) from Diutina rugosa (Yeast).